Here is a 301-residue protein sequence, read N- to C-terminus: Phosphonates import ATP-binding protein PhnC (301 aa).

An ABC transporter domain is found at 8–256 (IRIERLSKTF…LLKTLYGDEA (249 aa)). An ATP-binding site is contributed by 41–48 (GASGSGKS). The disordered stretch occupies residues 264–287 (AQGPDDTESKNTADNTPLQDAAPA).

The protein belongs to the ABC transporter superfamily. Phosphonates importer (TC 3.A.1.9.1) family. As to quaternary structure, the complex is composed of two ATP-binding proteins (PhnC), two transmembrane proteins (PhnE) and a solute-binding protein (PhnD).

The protein resides in the cell inner membrane. The catalysed reaction is phosphonate(out) + ATP + H2O = phosphonate(in) + ADP + phosphate + H(+). Functionally, part of the ABC transporter complex PhnCDE involved in phosphonates import. Responsible for energy coupling to the transport system. This chain is Phosphonates import ATP-binding protein PhnC, found in Paraburkholderia xenovorans (strain LB400).